The primary structure comprises 814 residues: Protein kintoun (814 aa).

Over residues 234–246 (AANTARSPASPAP) the composition is skewed to low complexity. 2 disordered regions span residues 234 to 259 (AANT…EPRC) and 357 to 490 (ARQE…MGDP). Basic and acidic residues predominate over residues 388–404 (AAREESADGTGADHGEK). Residues serine 444 and serine 618 each carry the phosphoserine modification. The tract at residues 654-686 (AGLQGKGKGVREGCPLSEAEAADQSATSPAASD) is disordered. The segment covering 675–686 (ADQSATSPAASD) has biased composition (low complexity).

It belongs to the PIH1 family. Kintoun subfamily. As to quaternary structure, interacts with DNAI2 and HSPA1A. Interacts with CFAP300. Interacts with DNAAF4. Interacts with DNAAF6/PIH1D3. Expressed in nearly all organs of adult, with higher expression in tissues known to have motile cilia and flagella, such as brain and testis.

It is found in the cytoplasm. The protein localises to the dynein axonemal particle. Its function is as follows. Required for cytoplasmic pre-assembly of axonemal dyneins, thereby playing a central role in motility in cilia and flagella. Involved in pre-assembly of dynein arm complexes in the cytoplasm before intraflagellar transport loads them for the ciliary compartment. The polypeptide is Protein kintoun (Mus musculus (Mouse)).